A 460-amino-acid polypeptide reads, in one-letter code: MPVEILMPALSPTMEEGTLSKWLKNEGDKVSSGDVIAEIETDKATMEVEAVDEGTIGKLLIAAGTEGVKVNTPIAVLLQDGEAASDIDSMKTEAPKAETPKPAAAEAPAASAAPVAAQPKADVPSDPAIPAGTEMATMTVREALRDAMAEEMRANEDVFVMGEEVAEYQGAYKVTQGLLQEFGARRVVDTPITEHGFAGVGVGAAMTGLRPIVEFMTFNFAMQAIDQIINSAAKTLYMSGGQMGAPIVFRGPSGAAARVAAQHSQCYAAWYSHIPGLKVVMPYTAADAKGLLKAAIRDPNPVIFLENEILYGQSFEVPKLDDFVLPIGKARIHRTGKDATLVSFGIGMTYAIKAAAELEAQGIDVEIIDLRTIRPMDLPTVIESVKKTGRLVTVEEGYPQSSVGTEIATRVMQQAFDYLDAPILTIAGKDVPMPYAANLEKLALPNVAEVVDAVKAVCYK.

Residues 2-78 enclose the Lipoyl-binding domain; sequence PVEILMPALS…KVNTPIAVLL (77 aa). N6-lipoyllysine is present on Lys43. A disordered region spans residues 91-131; it reads KTEAPKAETPKPAAAEAPAASAAPVAAQPKADVPSDPAIPA. Over residues 100–121 the composition is skewed to low complexity; the sequence is PKPAAAEAPAASAAPVAAQPKA. Residue Glu194 coordinates thiamine diphosphate.

As to quaternary structure, heterodimer of an alpha and a beta chain. It depends on (R)-lipoate as a cofactor. Thiamine diphosphate is required as a cofactor.

It carries out the reaction N(6)-[(R)-lipoyl]-L-lysyl-[protein] + pyruvate + H(+) = N(6)-[(R)-S(8)-acetyldihydrolipoyl]-L-lysyl-[protein] + CO2. In terms of biological role, the pyruvate dehydrogenase complex catalyzes the overall conversion of pyruvate to acetyl-CoA and CO(2). It contains multiple copies of three enzymatic components: pyruvate dehydrogenase (E1), dihydrolipoamide acetyltransferase (E2) and lipoamide dehydrogenase (E3). The polypeptide is Pyruvate dehydrogenase E1 component subunit beta (pdhB) (Rhizobium meliloti (strain 1021) (Ensifer meliloti)).